The sequence spans 192 residues: Elongation factor P (192 aa).

The protein belongs to the elongation factor P family.

The protein localises to the cytoplasm. It functions in the pathway protein biosynthesis; polypeptide chain elongation. Involved in peptide bond synthesis. Stimulates efficient translation and peptide-bond synthesis on native or reconstituted 70S ribosomes in vitro. Probably functions indirectly by altering the affinity of the ribosome for aminoacyl-tRNA, thus increasing their reactivity as acceptors for peptidyl transferase. The protein is Elongation factor P of Borrelia garinii subsp. bavariensis (strain ATCC BAA-2496 / DSM 23469 / PBi) (Borreliella bavariensis).